A 110-amino-acid chain; its full sequence is Phosphoribosyl-ATP pyrophosphatase (110 aa).

It belongs to the PRA-PH family.

It localises to the cytoplasm. The catalysed reaction is 1-(5-phospho-beta-D-ribosyl)-ATP + H2O = 1-(5-phospho-beta-D-ribosyl)-5'-AMP + diphosphate + H(+). It functions in the pathway amino-acid biosynthesis; L-histidine biosynthesis; L-histidine from 5-phospho-alpha-D-ribose 1-diphosphate: step 2/9. The protein is Phosphoribosyl-ATP pyrophosphatase of Pseudomonas savastanoi pv. phaseolicola (strain 1448A / Race 6) (Pseudomonas syringae pv. phaseolicola (strain 1448A / Race 6)).